The primary structure comprises 440 residues: Deoxyguanosinetriphosphate triphosphohydrolase-like protein (440 aa).

The HD domain occupies 62 to 255 (RLTHSLEAAQ…MELADDIAYG (194 aa)).

This sequence belongs to the dGTPase family. Type 2 subfamily.

The chain is Deoxyguanosinetriphosphate triphosphohydrolase-like protein from Vibrio parahaemolyticus serotype O3:K6 (strain RIMD 2210633).